The chain runs to 361 residues: 45 kDa calcium-binding protein (361 aa).

Positions 1–35 (MVWLVAMTSRQRSLCGLAAHGLWFLGLVLLMDATA) are cleaved as a signal peptide. Residue Asn39 is glycosylated (N-linked (GlcNAc...) asparagine). 2 EF-hand domains span residues 97–132 (RSRR…KTAE) and 136–171 (EAVK…SKGH). Ser98 carries the post-translational modification Phosphoserine. Ca(2+) is bound by residues Asp110, Asn112, Asp114, Arg116, Glu121, Asp149, Asp151, Asp153, His155, and Glu160. Thr192 bears the Phosphothreonine mark. EF-hand domains lie at 196–231 (LGNL…HSRG), 232–267 (MLKF…TVEN), 277–312 (WVKD…MNEY), and 313–348 (NALN…FTGS). Asp212 provides a ligand contact to Ca(2+). Thr216 bears the Phosphothreonine mark. Glu219, Asp245, Asp247, Asp249, Gln251, and Glu256 together coordinate Ca(2+). Thr264 bears the Phosphothreonine mark. Ca(2+) is bound by residues Asp290, Asn292, and Asp294. Residue Thr298 is modified to Phosphothreonine. Residues Glu301, Asp326, Asn328, Asn330, His332, and Glu337 each coordinate Ca(2+). The interval 308 to 361 (PMNEYNALNEAKQMIAIADENQNHHLEPEEILKYSEFFTGSKLMDYARNVHEEF) is necessary for intracellular retention in Golgi apparatus lumen.

Belongs to the CREC family. As to quaternary structure, a membrane-associated isoform interacts with STX3 and STXBP1. As to expression, a membrane-associated isoform is expressed in acini of the pancreas (at protein level). Ubiquitous.

It is found in the golgi apparatus lumen. Its function is as follows. A membrane-associated isoform may be involved in the exocytosis of zymogens by pancreatic acini. May regulate calcium-dependent activities in the endoplasmic reticulum lumen or post-ER compartment. This chain is 45 kDa calcium-binding protein (Sdf4), found in Rattus norvegicus (Rat).